Consider the following 792-residue polypeptide: Ribonucleoside-diphosphate reductase large subunit (792 aa).

Substrate contacts are provided by residues threonine 200, 215–216 (SC), glycine 246, 415–419 (NLCAE), and 606–610 (PTAGT). Cysteine 216 and cysteine 431 are joined by a disulfide. Catalysis depends on asparagine 415, which acts as the Proton acceptor. Cysteine 417 (cysteine radical intermediate) is an active-site residue. Catalysis depends on glutamate 419, which acts as the Proton acceptor. Residues 758–781 (SPPHSGMKQDGAWLPGPKNPEEES) form a disordered region.

This sequence belongs to the ribonucleoside diphosphate reductase large chain family. As to quaternary structure, heterotetramer composed of a homodimer of the large subunit (R1) and a homodimer of the small subunit (R2). Larger multisubunit protein complex are also active, composed of (R1)n(R2)n.

The catalysed reaction is a 2'-deoxyribonucleoside 5'-diphosphate + [thioredoxin]-disulfide + H2O = a ribonucleoside 5'-diphosphate + [thioredoxin]-dithiol. Functionally, ribonucleoside-diphosphate reductase holoenzyme provides the precursors necessary for viral DNA synthesis. Allows virus growth in non-dividing cells, as well as reactivation from latency in infected hosts. Catalyzes the biosynthesis of deoxyribonucleotides from the corresponding ribonucleotides. The chain is Ribonucleoside-diphosphate reductase large subunit from Human herpesvirus 8 type P (isolate GK18) (HHV-8).